Reading from the N-terminus, the 380-residue chain is Kappa-type opioid receptor (380 aa).

Residues 1–57 are Extracellular-facing; that stretch reads MEPPVQIFRGEPGPTCSPSTCLPPNGSGWFPGWAEPDGNGSAGSEDVLLEPAHISPV. N-linked (GlcNAc...) asparagine glycosylation is found at Asn25 and Asn39. A helical membrane pass occupies residues 58–85; the sequence is ILVIITAVYSVVFVVGLVGNSLVMFVII. At 86-95 the chain is on the cytoplasmic side; that stretch reads RYTKMKTATN. A helical membrane pass occupies residues 96-119; it reads IYIFNLALADALVTTTMPFQSTVY. The Extracellular portion of the chain corresponds to 120 to 132; that stretch reads LMNSWPFGDVLCK. The cysteines at positions 131 and 210 are disulfide-linked. The chain crosses the membrane as a helical span at residues 133 to 154; sequence VVISIDYYNMFTSIFTLTMMSV. Topologically, residues 155 to 173 are cytoplasmic; it reads DRYIAVCHPVKALDFRTPL. A helical transmembrane segment spans residues 174-196; it reads KAKIINICIWILSSSVGISAIVL. Residues 197-222 lie on the Extracellular side of the membrane; sequence GGTKVREDMEVIECSLQFPDDDYSWW. Residues 223–247 form a helical membrane-spanning segment; the sequence is DLFMKVCVFVFAFVIPVLIIIVCYT. Over 248-274 the chain is Cytoplasmic; sequence LMILRLKSVRLLSGSREKDRNLRRITR. The helical transmembrane segment at 275–296 threads the bilayer; sequence LVLVVVAVFVVCWTPIHIFILV. Residues 297–311 lie on the Extracellular side of the membrane; it reads EALGSTAHSTAALSS. Residues 312-333 form a helical membrane-spanning segment; sequence YYFCIALGYTNSSLNPILYAFL. Topologically, residues 334-380 are cytoplasmic; that stretch reads DENFKRCFRDFCFPIKMRMERQSTSRVRNTVQDPAYVREVDGVNKPV. The S-palmitoyl cysteine moiety is linked to residue Cys345.

Belongs to the G-protein coupled receptor 1 family. Interacts with NHERF1. Interacts with GABARAPL1.

Its subcellular location is the cell membrane. Its function is as follows. G-protein coupled opioid receptor that functions as a receptor for endogenous alpha-neoendorphins and dynorphins, but has low affinity for beta-endorphins. Also functions as a receptor for various synthetic opioids and for the psychoactive diterpene salvinorin A. Ligand binding causes a conformation change that triggers signaling via guanine nucleotide-binding proteins (G proteins) and modulates the activity of down-stream effectors, such as adenylate cyclase. Signaling leads to the inhibition of adenylate cyclase activity. Inhibits neurotransmitter release by reducing calcium ion currents and increasing potassium ion conductance. Plays a role in the perception of pain. Plays a role in mediating reduced physical activity upon treatment with synthetic opioids. Plays a role in the regulation of salivation in response to synthetic opioids. May play a role in arousal and regulation of autonomic and neuroendocrine functions. The protein is Kappa-type opioid receptor (OPRK1) of Bos taurus (Bovine).